Here is a 299-residue protein sequence, read N- to C-terminus: Centriolar and ciliogenesis-associated protein HYLS1 (299 aa).

Position 179 is a phosphoserine (S179).

This sequence belongs to the HYLS1 family.

Its subcellular location is the cytoplasm. It localises to the cell projection. The protein localises to the cilium. The protein resides in the cytoskeleton. It is found in the microtubule organizing center. Its subcellular location is the centrosome. It localises to the centriole. In terms of biological role, plays a role in ciliogenesis. This is Centriolar and ciliogenesis-associated protein HYLS1 from Homo sapiens (Human).